Reading from the N-terminus, the 147-residue chain is Hemoglobin subunit beta (147 aa).

The Globin domain occupies 3–147; that stretch reads EWTDFERATI…VVSSLGRQYH (145 aa). Residues H64 and H93 each contribute to the heme b site.

The protein belongs to the globin family. In terms of assembly, hb 1 is a heterotetramer of two alpha-1 and two beta chains. Hb 2 is a heterotetramer of two alpha-2 and two beta chains. As to expression, red blood cells.

Its function is as follows. Involved in oxygen transport from gills to the various peripheral tissues. This is Hemoglobin subunit beta (hbb) from Cottoperca gobio (Frogmouth).